A 274-amino-acid polypeptide reads, in one-letter code: Large ribosomal subunit protein uL2 (274 aa).

The interval 223–274 is disordered; that stretch reads GIAMNPVDHPHGGGEGRSKGNHPVTPWGMPTKGYKTRKKKQSDKYIISRRKK. A compositionally biased stretch (basic and acidic residues) spans 230 to 240; that stretch reads DHPHGGGEGRS. Residues 256-274 are compositionally biased toward basic residues; sequence YKTRKKKQSDKYIISRRKK.

Belongs to the universal ribosomal protein uL2 family. As to quaternary structure, part of the 50S ribosomal subunit. Forms a bridge to the 30S subunit in the 70S ribosome.

One of the primary rRNA binding proteins. Required for association of the 30S and 50S subunits to form the 70S ribosome, for tRNA binding and peptide bond formation. It has been suggested to have peptidyltransferase activity; this is somewhat controversial. Makes several contacts with the 16S rRNA in the 70S ribosome. This chain is Large ribosomal subunit protein uL2, found in Nautilia profundicola (strain ATCC BAA-1463 / DSM 18972 / AmH).